The primary structure comprises 158 residues: Transcription elongation factor GreA (158 aa).

Belongs to the GreA/GreB family.

Its function is as follows. Necessary for efficient RNA polymerase transcription elongation past template-encoded arresting sites. The arresting sites in DNA have the property of trapping a certain fraction of elongating RNA polymerases that pass through, resulting in locked ternary complexes. Cleavage of the nascent transcript by cleavage factors such as GreA or GreB allows the resumption of elongation from the new 3'terminus. GreA releases sequences of 2 to 3 nucleotides. The polypeptide is Transcription elongation factor GreA (Polaromonas naphthalenivorans (strain CJ2)).